We begin with the raw amino-acid sequence, 416 residues long: Glutamate dehydrogenase A2 (416 aa).

K105 is a catalytic residue.

The protein belongs to the Glu/Leu/Phe/Val dehydrogenases family. Homohexamer.

The polypeptide is Glutamate dehydrogenase A2 (gdhA2) (Halobacterium salinarum (strain ATCC 700922 / JCM 11081 / NRC-1) (Halobacterium halobium)).